Here is a 572-residue protein sequence, read N- to C-terminus: MGKPARWLKSVLLGKKPSKSSGSKDKERIVNGKEVVVISKIEESDVVSDLSSIGNAAVYTSGIVETQNLKHEDVSDDEIQVSEVQPTDSQDVASVPDDSLSESEKIQQEIAAVTVQAAYRGYLARRAFKILKGIIRLQALIRGHMVRRQAVSTLCCVMGIVRLQALARGREIRHSDIGVEVQRKCHLHHQPLENKANSVVDTHSYLGINKLTGNAFAQKLLASSPNVLPLSLDNDSSNSIWLENWSASCFWKPVPQPKKASLRKSQKKFASNPQIVEAEFARPKKSVRKVPSSNLDNSSVAQTSSELEKPKRSFRKVSTSQSVEPLPSMDNPQVDLEKVKRGLRKVHNPVVENSIQPQLVPQIAVEKPNGSLEESVNAFDEEKEDEVAETVVQQPEELIQTHTPLGTNESLDSTLVNQIEESEENVMAEEKEDVKEERTPKQNHKENSAGKENQKSGKKASSVTATQTAEFQESGNGNQTSSPGIPSYMQATKSAKAKLRLQGSSSPRQLGTTEKASRRYSLPSSGNSAKITSHSPKTRVSNSSGKSGNKTEKTLLSSREGNGKATPVEWKR.

Positions 75–96 (SDDEIQVSEVQPTDSQDVASVP) are disordered. Over residues 82–92 (SEVQPTDSQDV) the composition is skewed to polar residues. 2 consecutive IQ domains span residues 108-136 (QEIA…GIIR) and 137-154 (LQAL…VSTL). Positions 159–178 (GIVRLQALARGREIRHSDIG) are calmodulin-binding. Disordered regions lie at residues 282–332 (RPKK…MDNP) and 399–572 (IQTH…EWKR). Composition is skewed to polar residues over residues 291 to 305 (PSSN…QTSS) and 400 to 419 (QTHT…VNQI). A compositionally biased stretch (basic and acidic residues) spans 428 to 455 (AEEKEDVKEERTPKQNHKENSAGKENQK). Composition is skewed to polar residues over residues 459-493 (KASS…QATK), 502-514 (QGSS…GTTE), and 522-560 (LPSS…SSRE).

Belongs to the IQD family. Binds to multiple calmodulin (CaM) in the presence of Ca(2+) and CaM-like proteins.

The protein resides in the nucleus envelope. Its subcellular location is the cytoplasm. The protein localises to the cytoskeleton. May be involved in cooperative interactions with calmodulins or calmodulin-like proteins. Recruits calmodulin proteins to microtubules, thus being a potential scaffold in cellular signaling and trafficking. May associate with nucleic acids and regulate gene expression at the transcriptional or post-transcriptional level. This Arabidopsis thaliana (Mouse-ear cress) protein is Protein IQ-DOMAIN 30.